Consider the following 70-residue polypeptide: uncharacterized protein (70 aa).

Helical transmembrane passes span 19–39 and 40–60; these read VIAL…VVGL and LFKL…VRKF.

It localises to the cell membrane. This is an uncharacterized protein from Streptomyces coelicolor (strain ATCC BAA-471 / A3(2) / M145).